Consider the following 682-residue polypeptide: Potassium-transporting ATPase ATP-binding subunit (682 aa).

Transmembrane regions (helical) follow at residues 34 to 54, 62 to 82, 219 to 239, and 254 to 274; these read PVMF…IAMA, ALFS…ANFA, IALT…TATL, and VLVA…LSAI. Aspartate 307 (4-aspartylphosphate intermediate) is an active-site residue. Residues aspartate 344, glutamate 348, 377 to 384, and lysine 395 contribute to the ATP site; that span reads FTAQSRMS. The Mg(2+) site is built by aspartate 518 and aspartate 522. Transmembrane regions (helical) follow at residues 588-608, 616-636, and 656-676; these read FAII…LNIM, AILS…PLAL, and IYGL…DLLL.

It belongs to the cation transport ATPase (P-type) (TC 3.A.3) family. Type IA subfamily. In terms of assembly, the system is composed of three essential subunits: KdpA, KdpB and KdpC.

It localises to the cell inner membrane. The catalysed reaction is K(+)(out) + ATP + H2O = K(+)(in) + ADP + phosphate + H(+). Part of the high-affinity ATP-driven potassium transport (or Kdp) system, which catalyzes the hydrolysis of ATP coupled with the electrogenic transport of potassium into the cytoplasm. This subunit is responsible for energy coupling to the transport system and for the release of the potassium ions to the cytoplasm. The chain is Potassium-transporting ATPase ATP-binding subunit from Shigella boydii serotype 18 (strain CDC 3083-94 / BS512).